The primary structure comprises 275 residues: Large ribosomal subunit protein uL2c (275 aa).

Disordered regions lie at residues 1 to 30 and 225 to 275; these read MAIH…QKQK and MNPV…RRRK. Over residues 21-30 the composition is skewed to polar residues; that stretch reads QAKSTPQKQK.

It belongs to the universal ribosomal protein uL2 family. As to quaternary structure, part of the 50S ribosomal subunit.

The protein resides in the plastid. The protein localises to the chloroplast. The protein is Large ribosomal subunit protein uL2c (rpl2) of Illicium oligandrum (Star anise).